The chain runs to 439 residues: Adenylosuccinate synthetase (439 aa).

Residues 25–31 (GDEGKGK), 53–55 (GHT), and K62 contribute to the GTP site. The active-site Proton acceptor is the D26. Residues D26 and G53 each contribute to the Mg(2+) site. IMP-binding positions include 26-29 (DEGK) and 51-54 (NAGH). H54 acts as the Proton donor in catalysis. IMP contacts are provided by T141, R155, N232, and T247. Residue T307 coordinates GTP. 307 to 313 (TTTNRPR) is a binding site for substrate. R311 contacts IMP. GTP-binding positions include R313, 339 to 341 (KLD), and 425 to 427 (GVG).

This sequence belongs to the adenylosuccinate synthetase family. As to quaternary structure, homodimer. It depends on Mg(2+) as a cofactor.

Its subcellular location is the cytoplasm. The catalysed reaction is IMP + L-aspartate + GTP = N(6)-(1,2-dicarboxyethyl)-AMP + GDP + phosphate + 2 H(+). Its pathway is purine metabolism; AMP biosynthesis via de novo pathway; AMP from IMP: step 1/2. Plays an important role in the salvage pathway for purine nucleotide biosynthesis. Catalyzes the first committed step in the biosynthesis of AMP from IMP. This is Adenylosuccinate synthetase from Plasmodium yoelii yoelii.